Consider the following 410-residue polypeptide: Solute carrier family 52, riboflavin transporter, member 3 (410 aa).

A run of 3 helical transmembrane segments spans residues 3 to 23 (ILIYALACAFGLGSWLAINGL), 40 to 60 (LPSYLTVIIQLANLGPLLVTL), and 73 to 93 (VVIYTILCIGVLACFLLAFFL). Asn-157 is a glycosylation site (N-linked (GlcNAc...) asparagine). Helical transmembrane passes span 158-178 (FTTEVFFFFLAVMMCISLAAF), 239-259 (FQLTFIYLMVVWVNGTTNGLL), 277-297 (LSAALASVANPVACIVAMFFP), 301-321 (LVFLGLLCVMGTGFASYNMAM), 334-354 (ALGEAIIVLSWVFFTGSLSYV), and 369-389 (ALVWCGAAAQIGSLIGSVIMF).

Belongs to the riboflavin transporter family.

It is found in the cell membrane. The catalysed reaction is riboflavin(in) = riboflavin(out). Functionally, plasma membrane transporter mediating the uptake by cells of the water soluble vitamin B2/riboflavin that plays a key role in biochemical oxidation-reduction reactions of the carbohydrate, lipid, and amino acid metabolism. This Osmerus mordax (Rainbow smelt) protein is Solute carrier family 52, riboflavin transporter, member 3 (slc52a3).